The primary structure comprises 461 residues: Cysteine--tRNA ligase (461 aa).

Cys28 contacts Zn(2+). A 'HIGH' region motif is present at residues 30-40 (ITVYDLCHIGH). Positions 209, 234, and 238 each coordinate Zn(2+). A 'KMSKS' region motif is present at residues 266 to 270 (KMSKS). An ATP-binding site is contributed by Lys269.

Belongs to the class-I aminoacyl-tRNA synthetase family. Monomer. It depends on Zn(2+) as a cofactor.

It localises to the cytoplasm. It catalyses the reaction tRNA(Cys) + L-cysteine + ATP = L-cysteinyl-tRNA(Cys) + AMP + diphosphate. The sequence is that of Cysteine--tRNA ligase from Salmonella arizonae (strain ATCC BAA-731 / CDC346-86 / RSK2980).